The primary structure comprises 330 residues: Methionyl-tRNA formyltransferase (330 aa).

116–119 (SLLP) lines the (6S)-5,6,7,8-tetrahydrofolate pocket.

Belongs to the Fmt family.

The enzyme catalyses L-methionyl-tRNA(fMet) + (6R)-10-formyltetrahydrofolate = N-formyl-L-methionyl-tRNA(fMet) + (6S)-5,6,7,8-tetrahydrofolate + H(+). Functionally, attaches a formyl group to the free amino group of methionyl-tRNA(fMet). The formyl group appears to play a dual role in the initiator identity of N-formylmethionyl-tRNA by promoting its recognition by IF2 and preventing the misappropriation of this tRNA by the elongation apparatus. This chain is Methionyl-tRNA formyltransferase, found in Nitratidesulfovibrio vulgaris (strain ATCC 29579 / DSM 644 / CCUG 34227 / NCIMB 8303 / VKM B-1760 / Hildenborough) (Desulfovibrio vulgaris).